We begin with the raw amino-acid sequence, 126 residues long: Protein ApaG (126 aa).

One can recognise an ApaG domain in the interval 2 to 126 (SQLTSSVRVD…FRLSIPGLLH (125 aa)).

The polypeptide is Protein ApaG (Shewanella halifaxensis (strain HAW-EB4)).